Here is a 314-residue protein sequence, read N- to C-terminus: Formimidoylglutamase (314 aa).

Histidine 127, aspartate 153, histidine 155, aspartate 157, aspartate 245, and aspartate 247 together coordinate Mn(2+).

It belongs to the arginase family. It depends on Mn(2+) as a cofactor.

It carries out the reaction N-formimidoyl-L-glutamate + H2O = formamide + L-glutamate. It participates in amino-acid degradation; L-histidine degradation into L-glutamate; L-glutamate from N-formimidoyl-L-glutamate (hydrolase route): step 1/1. Functionally, catalyzes the conversion of N-formimidoyl-L-glutamate to L-glutamate and formamide. In Aeromonas hydrophila subsp. hydrophila (strain ATCC 7966 / DSM 30187 / BCRC 13018 / CCUG 14551 / JCM 1027 / KCTC 2358 / NCIMB 9240 / NCTC 8049), this protein is Formimidoylglutamase.